A 321-amino-acid chain; its full sequence is tRNA 2-thiolation protein NcsA (321 aa).

K204 participates in a covalent cross-link: Glycyl lysine isopeptide (Lys-Gly) (interchain with G-Cter in SAMP2).

This sequence belongs to the TtcA family. CTU1/NCS6/ATPBD3 subfamily. Interacts with monomeric and polymeric forms of SAMP2. Interacts with UbaA. Interacts with archaeal EF-1-alpha and Pan1. Non-sampylated protein forms a complex with archaeal CPSF1 of approximately 100 kDa. Post-translationally, sampylated at Lys-204 with the archaeal ubiquitin-like protein SAMP2. Polymeric chains of SAMP2 are also linked.

It participates in tRNA modification; 5-methoxycarbonylmethyl-2-thiouridine-tRNA biosynthesis. In terms of biological role, required for thiolation of mcm(5)S(2)U at the wobble uridine position of tRNA specific for lysine (tRNA(Lys)). Probably acts by catalyzing adenylation of tRNA, an intermediate required for 2-thiolation. May also act as a sulfurtransferase that transfers sulfur from thiocarboxylated SAMP2 onto the uridine of tRNA at wobble position. Required for cell growth at elevated temperatures. This Haloferax volcanii (strain ATCC 29605 / DSM 3757 / JCM 8879 / NBRC 14742 / NCIMB 2012 / VKM B-1768 / DS2) (Halobacterium volcanii) protein is tRNA 2-thiolation protein NcsA.